We begin with the raw amino-acid sequence, 181 residues long: Crossover junction endodeoxyribonuclease RuvC (181 aa).

Active-site residues include Asp-7, Glu-67, and Asp-139. 3 residues coordinate Mg(2+): Asp-7, Glu-67, and Asp-139.

This sequence belongs to the RuvC family. In terms of assembly, homodimer which binds Holliday junction (HJ) DNA. The HJ becomes 2-fold symmetrical on binding to RuvC with unstacked arms; it has a different conformation from HJ DNA in complex with RuvA. In the full resolvosome a probable DNA-RuvA(4)-RuvB(12)-RuvC(2) complex forms which resolves the HJ. Mg(2+) is required as a cofactor.

The protein localises to the cytoplasm. It carries out the reaction Endonucleolytic cleavage at a junction such as a reciprocal single-stranded crossover between two homologous DNA duplexes (Holliday junction).. The RuvA-RuvB-RuvC complex processes Holliday junction (HJ) DNA during genetic recombination and DNA repair. Endonuclease that resolves HJ intermediates. Cleaves cruciform DNA by making single-stranded nicks across the HJ at symmetrical positions within the homologous arms, yielding a 5'-phosphate and a 3'-hydroxyl group; requires a central core of homology in the junction. The consensus cleavage sequence is 5'-(A/T)TT(C/G)-3'. Cleavage occurs on the 3'-side of the TT dinucleotide at the point of strand exchange. HJ branch migration catalyzed by RuvA-RuvB allows RuvC to scan DNA until it finds its consensus sequence, where it cleaves and resolves the cruciform DNA. In Bordetella avium (strain 197N), this protein is Crossover junction endodeoxyribonuclease RuvC.